The following is a 439-amino-acid chain: Ribosomal protein uS12 methylthiotransferase RimO (439 aa).

The 111-residue stretch at 4 to 114 (PKVGFVSLGC…VVRAVHGVAP (111 aa)) folds into the MTTase N-terminal domain. [4Fe-4S] cluster is bound by residues C13, C49, C78, C147, C151, and C154. One can recognise a Radical SAM core domain in the interval 133–370 (LTPRHYAYLK…MEHQQAISTA (238 aa)). The TRAM domain occupies 373–439 (STRVGREIDV…EYDLWGERIA (67 aa)).

This sequence belongs to the methylthiotransferase family. RimO subfamily. [4Fe-4S] cluster serves as cofactor.

The protein resides in the cytoplasm. It catalyses the reaction L-aspartate(89)-[ribosomal protein uS12]-hydrogen + (sulfur carrier)-SH + AH2 + 2 S-adenosyl-L-methionine = 3-methylsulfanyl-L-aspartate(89)-[ribosomal protein uS12]-hydrogen + (sulfur carrier)-H + 5'-deoxyadenosine + L-methionine + A + S-adenosyl-L-homocysteine + 2 H(+). Its function is as follows. Catalyzes the methylthiolation of an aspartic acid residue of ribosomal protein uS12. The polypeptide is Ribosomal protein uS12 methylthiotransferase RimO (Bordetella parapertussis (strain 12822 / ATCC BAA-587 / NCTC 13253)).